The primary structure comprises 429 residues: Saccharopine dehydrogenase-like oxidoreductase (429 aa).

Residue alanine 2 is modified to N-acetylalanine. Position 217 is a phosphoserine (serine 217).

The protein belongs to the saccharopine dehydrogenase family.

In Bos taurus (Bovine), this protein is Saccharopine dehydrogenase-like oxidoreductase (SCCPDH).